A 660-amino-acid polypeptide reads, in one-letter code: Pro-secreted protein ORF2 (660 aa).

An N-terminal signal peptide occupies residues 1 to 19 (MRPRPILLLLLMFLPMLPA). Disordered stretches follow at residues 18-43 (PAPPPGQPSGRRRGRRSGGSGGGFWG) and 66-127 (VTAA…DVDS). Positions 28–33 (RRRGRR) match the Nuclear localization signal motif. The span at 103–116 (TTAGAAPLTAVAPA) shows a compositional bias: low complexity. N-linked (GlcNAc...) asparagine; by host glycans are attached at residues N137 and N310. A particle formation region spans residues 368–394 (IALTLFNLADTLLGGLPTELISSAGGQ). N562 is a glycosylation site (N-linked (GlcNAc...) asparagine; by host). Residues 585–610 (TTSLGAGPVSISAVAVLAPHSALALL) are oligomerization.

Belongs to the hepevirus capsid protein family. In terms of assembly, homodimer. As to quaternary structure, self-assembles to form the capsid. The capsid is dominated by dimers that define the 30 morphological units. Interacts with phosphorylated protein ORF3. Interacts with host TMEM134. Interacts with host ASGR1 and ASGR2; these interactions facilitate infection of host hepatocytes. In terms of processing, cleaved by host protease in the N-terminus. Post-translationally, N-glycosylated. Not N-glycosylated. The C-terminus of the capsid protein ORF2 is truncated in non-enveloped virions shedded in feces, probably due to host proteases.

It localises to the secreted. The protein localises to the virion. Its subcellular location is the host cytoplasm. The protein resides in the host endoplasmic reticulum. It is found in the host Golgi apparatus. It localises to the host cell surface. The protein localises to the host nucleus. Plays a role in the inhibition of host antibody-mediated neutralization without blocking viral cell entry. Its function is as follows. Forms an icosahedral capsid with a T=1 symmetry and a 34 nm diameter. The capsid is composed of 60 copies linked to each other. Binds to the 5' end of the genomic RNA to mediate genome encapsidation. Binds to heparin surface proteoglycans (HSPGs) to mediate viral entry. Additionally, the interactions with host ASGR1 and ASGR2 facilitate viral infection of hepatocytes. Inhibits IFN production by blocking host TBK1-induced IRF3 phosphorylation. The nuclear form probably modulates host gene expression. The polypeptide is Pro-secreted protein ORF2 (Hepatitis E virus genotype 1 (isolate Human/Burma) (HEV-1)).